The following is a 675-amino-acid chain: DNA gyrase subunit B (675 aa).

The Toprim domain occupies S453 to P567. Mg(2+)-binding residues include E459, D532, and D534.

It belongs to the type II topoisomerase GyrB family. As to quaternary structure, heterotetramer, composed of two GyrA and two GyrB chains. In the heterotetramer, GyrA contains the active site tyrosine that forms a transient covalent intermediate with DNA, while GyrB binds cofactors and catalyzes ATP hydrolysis. Mg(2+) is required as a cofactor. It depends on Mn(2+) as a cofactor. Ca(2+) serves as cofactor.

Its subcellular location is the cytoplasm. The enzyme catalyses ATP-dependent breakage, passage and rejoining of double-stranded DNA.. With respect to regulation, inhibited by 4-quinoline drugs (nalidixic acid, ciprofloxacin, ofloxacin), although it is much less sensitive than the corresponding enzyme from E.coli. GyrB intrinsic ATPase activity inhibited by aminopyrazinamide and pyrrolamide derivatives. A type II topoisomerase that negatively supercoils closed circular double-stranded (ds) DNA in an ATP-dependent manner to modulate DNA topology and maintain chromosomes in an underwound state. Negative supercoiling favors strand separation, and DNA replication, transcription, recombination and repair, all of which involve strand separation. Also able to catalyze the interconversion of other topological isomers of dsDNA rings, including catenanes and knotted rings. Type II topoisomerases break and join 2 DNA strands simultaneously in an ATP-dependent manner. The chain is DNA gyrase subunit B from Mycolicibacterium smegmatis (strain ATCC 700084 / mc(2)155) (Mycobacterium smegmatis).